A 334-amino-acid chain; its full sequence is Homoserine O-acetyltransferase (334 aa).

An AB hydrolase-1 domain is found at 61-318 (LVLHALTGDS…GSIHGHDAFL (258 aa)). Residue S148 is the Nucleophile of the active site. R205 provides a ligand contact to substrate. Catalysis depends on residues D285 and H314. Residue D315 participates in substrate binding.

The protein belongs to the AB hydrolase superfamily. MetX family. Homodimer.

It is found in the cytoplasm. The catalysed reaction is L-homoserine + acetyl-CoA = O-acetyl-L-homoserine + CoA. The protein operates within amino-acid biosynthesis; L-methionine biosynthesis via de novo pathway; O-acetyl-L-homoserine from L-homoserine: step 1/1. Transfers an acetyl group from acetyl-CoA to L-homoserine, forming acetyl-L-homoserine. The sequence is that of Homoserine O-acetyltransferase from Deinococcus radiodurans (strain ATCC 13939 / DSM 20539 / JCM 16871 / CCUG 27074 / LMG 4051 / NBRC 15346 / NCIMB 9279 / VKM B-1422 / R1).